The primary structure comprises 390 residues: Serpin B4 (390 aa).

The residue at position 1 (Met1) is an N-acetylmethionine.

This sequence belongs to the serpin family. Ov-serpin subfamily. In terms of tissue distribution, squamous cells.

It localises to the cytoplasm. May act as a protease inhibitor to modulate the host immune response against tumor cells. The protein is Serpin B4 (SERPINB4) of Homo sapiens (Human).